The primary structure comprises 2998 residues: Probable polyketide synthase 14 (2998 aa).

The Ketosynthase family 3 (KS3) domain maps to 19–456; it reads EDDIAIIGIG…GSNCCLILSE (438 aa). Catalysis depends on for beta-ketoacyl synthase activity residues cysteine 189, histidine 331, and histidine 376. An acyl/malonyl transferase region spans residues 657–690; it reads GIEASFIVGHSLGEIPAAYCSGMITLDTLCYLIY. Serine 667 functions as the For acyl/malonyl transferase activity in the catalytic mechanism. An N-terminal hotdog fold region spans residues 962–1084; it reads IDQLGFSLIE…GNFQLFTSGN (123 aa). The 288-residue stretch at 962-1249 folds into the PKS/mFAS DH domain; that stretch reads IDQLGFSLIE…CKSLTIIKDS (288 aa). Histidine 996 (proton acceptor; for dehydratase activity) is an active-site residue. The C-terminal hotdog fold stretch occupies residues 1101 to 1249; it reads NLTKLTKNEL…CKSLTIIKDS (149 aa). Aspartate 1159 serves as the catalytic Proton donor; for dehydratase activity. A helical membrane pass occupies residues 1979 to 1999; it reads SILIHSGSGGIGLSALNILKW. The Carrier domain maps to 2476 to 2553; that stretch reads ENDTSIDSLF…SSIKLITNQL (78 aa). The residue at position 2513 (serine 2513) is an O-(pantetheine 4'-phosphoryl)serine. A disordered region spans residues 2559–2578; sequence DGQQQQHRQNKKNNNIPENK. Over residues 2561 to 2573 the composition is skewed to low complexity; it reads QQQQHRQNKKNNN. A helical transmembrane segment spans residues 2621–2641; that stretch reads IFLTGSTGFLGAYLLWYLIQM.

Pantetheine 4'-phosphate serves as cofactor.

The protein localises to the membrane. Functionally, probable polyketide synthase. The sequence is that of Probable polyketide synthase 14 (pks14) from Dictyostelium discoideum (Social amoeba).